Reading from the N-terminus, the 300-residue chain is MESVLDAFDQYLALERGRSDHTRRAYLGDLRSLFAFVDERTPGADLGSLTLPVLRAWLSAQAAAGTARTTLARRTSAVKTFTAWAVRRGLMASDPATRLQMPKARRTLPAVLRQDQARDALDAANSGAQQGDPLALRDRLIVEMLYATGIRVSELCGLDIDDVDTSRRLLRVLGKGDKQRTVPFGEPAEQALRAWLTSGRPALATAESGPALLLGARGRRLDPRQARTVVHETVGAVAGAPDIGPHGLRHSAATHLLEGGADLRIVQELLGHSTLATTQLYTHVTVARLRAVHDQAHPRA.

The Core-binding (CB) domain maps to 1–86 (MESVLDAFDQ…AVKTFTAWAV (86 aa)). Residues 107–294 (TLPAVLRQDQ…TVARLRAVHD (188 aa)) enclose the Tyr recombinase domain. Catalysis depends on residues R151, K175, H246, R249, and H272. Y281 functions as the O-(3'-phospho-DNA)-tyrosine intermediate in the catalytic mechanism.

This sequence belongs to the 'phage' integrase family. XerC subfamily. Forms a cyclic heterotetrameric complex composed of two molecules of XerC and two molecules of XerD.

The protein resides in the cytoplasm. Site-specific tyrosine recombinase, which acts by catalyzing the cutting and rejoining of the recombining DNA molecules. The XerC-XerD complex is essential to convert dimers of the bacterial chromosome into monomers to permit their segregation at cell division. It also contributes to the segregational stability of plasmids. This chain is Tyrosine recombinase XerC, found in Mycobacterium sp. (strain JLS).